A 69-amino-acid chain; its full sequence is Large ribosomal subunit protein bL31 (69 aa).

C17, C19, C37, and C40 together coordinate Zn(2+).

Belongs to the bacterial ribosomal protein bL31 family. Type A subfamily. In terms of assembly, part of the 50S ribosomal subunit. Zn(2+) is required as a cofactor.

Its function is as follows. Binds the 23S rRNA. The chain is Large ribosomal subunit protein bL31 from Clostridium botulinum (strain Eklund 17B / Type B).